Here is a 944-residue protein sequence, read N- to C-terminus: E3 ubiquitin-protein ligase JMJ24 (944 aa).

Disordered stretches follow at residues 20–40 and 77–103; these read QTRS…GIPD and ANSA…YSEG. One can recognise a WRC domain in the interval 38–83; sequence IPDDLRCKRSDGKQWRCTAMSMADKTVCEKHYIQAKKRAANSAFRA. Residues 73–80 carry the Nuclear localization signal 1 motif; the sequence is KKRAANSA. A PHD-type; atypical zinc finger spans residues 217-269; the sequence is GEICHQCQRKDRERIISCLKCNQRAFCHNCLSARYSEISLEEVEKVCPACRGL. 8 residues coordinate Zn(2+): cysteine 220, cysteine 223, cysteine 234, cysteine 237, cysteine 243, cysteine 246, cysteine 263, and cysteine 266. The Nuclear localization signal 2 signature appears at 323-330; the sequence is EKRLREVE. The region spanning 621–873 is the JmjC domain; that stretch reads PRLGLLNVAA…ESARLAEEIR (253 aa). Positions 685 to 703 are enriched in basic and acidic residues; that stretch reads ERVRKTKPVPEEPDQKMSE. The segment at 685-715 is disordered; the sequence is ERVRKTKPVPEEPDQKMSENESLLSPEQKLR.

It belongs to the JARID1 histone demethylase family. As to quaternary structure, homodimer. Interacts with RDR2. Binds to CMT3. Associates with the E2 ubiquitin-conjugating enzyme UBC10. Post-translationally, self-ubiquitinates. In terms of tissue distribution, expressed in inflorescences, flowers, roots, siliques, leaves and stems, especially in the vasculature (mainly phloem), with highest levels in floral organs.

It localises to the nucleus. The enzyme catalyses S-ubiquitinyl-[E2 ubiquitin-conjugating enzyme]-L-cysteine + [acceptor protein]-L-lysine = [E2 ubiquitin-conjugating enzyme]-L-cysteine + N(6)-ubiquitinyl-[acceptor protein]-L-lysine.. Functionally, binds histone H3 but seems to have lost demethylase activity probably due to its inability to bind iron Fe(2+). Possesses E3 ubiquitin ligase activity and targets directly CMT3 for proteasomal degradation to initiate destabilization of the heterochromatic state (e.g. CHG cytosine methylation and H3K9me2) of endogenous silenced loci. Required for the removal of repressive H3K9me2 histone marks to facilitate the transcription of AtSN1, AtMu1c, solo LTR and SDC, thus counteracting their transcriptional silencing. Mainly required to promote the basal level transcription of silenced loci such as TE and repeats targeted by RNA-dependent DNA methylation (RdDM) for silencing, a specialized branch of the RNA interference (RNAi) pathway. Also cooperates with RNAi pathways for gene silencing both by contributing to the production of 24-nt siRNA to initiate RdDM and by recruiting RDR2 to enable local transcripts to make dsRNA. Antagonizes histone H3K9 demethylase IBM1/JMJ25 function. The sequence is that of E3 ubiquitin-protein ligase JMJ24 from Arabidopsis thaliana (Mouse-ear cress).